The primary structure comprises 715 residues: Probable serine/threonine-protein kinase MARK-B (715 aa).

The segment covering 24-37 has biased composition (low complexity); that stretch reads SCSSNSTTSSSSNS. The tract at residues 24–65 is disordered; the sequence is SCSSNSTTSSSSNSPKQNKVSPGYRNKPQQQQHKKGHKMGNY. The Protein kinase domain occupies 65–320; the sequence is YLLGKTIGSG…LDEIKTHVWV (256 aa). ATP is bound by residues 71–79 and Lys-94; that span reads IGSGTSSKV. The Proton acceptor role is filled by Asp-187. Basic and acidic residues predominate over residues 335-344; it reads KVSDRLEKEQ. 2 disordered regions span residues 335–399 and 446–530; these read KVSD…IPQN and CSAP…HHST. Over residues 345 to 368 the composition is skewed to low complexity; it reads QQQTPQHQQTQQQLQPQSQLQQHS. A compositionally biased stretch (polar residues) spans 381–399; sequence IGSNRPLNQSSPNLTIPQN. 2 stretches are compositionally biased toward low complexity: residues 451-478 and 487-513; these read SPHS…LSVS and SSNP…INTS. Residues 517–527 are compositionally biased toward basic residues; it reads QYHHHHHHQNH. A KA1 domain is found at 666–715; sequence LCPRNETINFEIEVCKVNGMDMYGIKFKRLSGDAWSYSSSCIKIVESLKL.

It belongs to the protein kinase superfamily. CAMK Ser/Thr protein kinase family. SNF1 subfamily.

It catalyses the reaction L-seryl-[protein] + ATP = O-phospho-L-seryl-[protein] + ADP + H(+). The catalysed reaction is L-threonyl-[protein] + ATP = O-phospho-L-threonyl-[protein] + ADP + H(+). This chain is Probable serine/threonine-protein kinase MARK-B (mrkB), found in Dictyostelium discoideum (Social amoeba).